We begin with the raw amino-acid sequence, 221 residues long: MDNCELVGSRIRLGLDMDGVLFDFDSKIMDKFAEMGIQFTDVKEMSSAVEFDKSIKQRHREIYHVPGFFANLPPIKGAVNAYKYLKSLTDINNNKIFEIFIVSTPSFRNQTCCIDKINDLNKYFGPELLEKVFFCRDKTLVNLDILIDDKPEIRGFNGSSECLSDSNSVTNKMSFQHIRFHSDMYKYSDDVPIINNWIDGTYIDVVKNVCVDKNLLREVVV.

Residues D16 and D18 each coordinate Mg(2+). The Nucleophile role is filled by D18. Phosphate contacts are provided by D18, S103, and K138. D149 is a Mg(2+) binding site.

This sequence belongs to the 5'(3')-deoxyribonucleotidase family. Requires Mg(2+) as cofactor.

Functionally, dephosphorylates the 5' and 2'(3')-phosphates of deoxyribonucleotides. The sequence is that of Putative 5'(3')-deoxyribonucleotidase R824 from Acanthamoeba polyphaga mimivirus (APMV).